Consider the following 265-residue polypeptide: Phosphatidylglycerol--prolipoprotein diacylglyceryl transferase (265 aa).

7 helical membrane-spanning segments follow: residues 17–37 (LAIRWYGLMYLAAFAQFIWLA), 59–79 (MLFYGVLGVIIGGRLGEVLFY), 94–114 (VWKGGMSFHGGFLGVLLAMSI), 123–143 (VLDVWDFIAPMVPLGYAFGRL), 177–197 (SPLYQALVDGLLMFILLWLFA), 204–224 (MAVGGMFALLYGSARFFTEYF), and 238–258 (ISAGQMLSVPLIVLGIVMLLI). Arg142 is a binding site for a 1,2-diacyl-sn-glycero-3-phospho-(1'-sn-glycerol).

It belongs to the Lgt family.

It localises to the cell inner membrane. It carries out the reaction L-cysteinyl-[prolipoprotein] + a 1,2-diacyl-sn-glycero-3-phospho-(1'-sn-glycerol) = an S-1,2-diacyl-sn-glyceryl-L-cysteinyl-[prolipoprotein] + sn-glycerol 1-phosphate + H(+). It participates in protein modification; lipoprotein biosynthesis (diacylglyceryl transfer). Functionally, catalyzes the transfer of the diacylglyceryl group from phosphatidylglycerol to the sulfhydryl group of the N-terminal cysteine of a prolipoprotein, the first step in the formation of mature lipoproteins. This is Phosphatidylglycerol--prolipoprotein diacylglyceryl transferase from Janthinobacterium sp. (strain Marseille) (Minibacterium massiliensis).